The primary structure comprises 505 residues: Flagellin (505 aa).

The protein belongs to the bacterial flagellin family.

It localises to the secreted. Its subcellular location is the bacterial flagellum. Functionally, flagellin is the subunit protein which polymerizes to form the filaments of bacterial flagella. This is Flagellin (fliC) from Salmonella senftenberg.